The primary structure comprises 556 residues: Glycosyl hydrolase 5 family protein (556 aa).

An N-terminal signal peptide occupies residues 1–28; the sequence is MTSAGVAPTALRLLTALLLLLVAAPSHS. 2 N-linked (GlcNAc...) asparagine glycosylation sites follow: Asn102 and Asn113. Residue Glu208 is the Proton donor/acceptor of the active site. Residues Asn212, Asn290, and Asn307 are each glycosylated (N-linked (GlcNAc...) asparagine). Glu473 serves as the catalytic Nucleophile. Residues Asn474 and Asn479 are each glycosylated (N-linked (GlcNAc...) asparagine).

Belongs to the glycosyl hydrolase 5 (cellulase A) family. In terms of processing, glycosylated.

May have glycosyl hydrolase activity. The chain is Glycosyl hydrolase 5 family protein from Chamaecyparis obtusa (Hinoki false-cypress).